The primary structure comprises 293 residues: uncharacterized protein (293 aa).

Residues 65–89 (LQKYLENIKNKKLNLNKQSNNQTNN) are a coiled coil. The disordered stretch occupies residues 81 to 112 (KQSNNQTNNQTNNQTNNQTNNQTNNIRPQINN).

Its subcellular location is the virion. This is an uncharacterized protein from Acanthamoeba polyphaga mimivirus (APMV).